A 557-amino-acid chain; its full sequence is Neurofilament light polypeptide (557 aa).

S2 carries the post-translational modification N-acetylserine. Residues 2-89 (SSYSYDPYYT…KIVRTQEKAQ (88 aa)) are head. The region spanning 86–396 (EKAQLQDLND…KLLEGEETRL (311 aa)) is the IF rod domain. Positions 90–121 (LQDLNDRFANFIERVHELEQRNKVLEAELLLL) are coil 1A. The tract at residues 122 to 134 (RQKHNEPSRLRDL) is linker 1. Residues 135-230 (YEQEVRELRL…KVHEEELAQL (96 aa)) are coil 1B. A linker 12 region spans residues 231-248 (QSQVQYAQISLEVEVAKP). The interval 249-267 (DLSSALRDIRAQYEKLAAK) is coil 2A. The interval 268–276 (NMQSAEDWF) is linker 2. A coil 2B region spans residues 277 to 392 (KSRFTVLTQS…AAYRKLLEGE (116 aa)). Residues 393-437 (ETRLSFSGVGAITSGYTQSAPVFGRSAYSLQSSSYMTSRAFPTYY) are tail, subdomain A. Residues 393–557 (ETRLSFSGVG…KKKKKKKKKK (165 aa)) form a tail region. The interval 438–557 (SSHVQEEQLD…KKKKKKKKKK (120 aa)) is tail, subdomain B (acidic). The tract at residues 452-557 (IESSRAEEAK…KKKKKKKKKK (106 aa)) is disordered. Positions 453 to 464 (ESSRAEEAKAEA) are enriched in basic and acidic residues. Residues 465–538 (PEEEEEEAGE…GEGEEEEEGK (74 aa)) are compositionally biased toward acidic residues. Residues 539–548 (GEEPAEEESK) show a composition bias toward basic and acidic residues.

Belongs to the intermediate filament family. In terms of assembly, forms homodimers (in vitro).

The protein localises to the cell projection. The protein resides in the axon. It localises to the cytoplasm. It is found in the cytoskeleton. Its function is as follows. Neurofilaments usually contain three intermediate filament proteins: NEFL, NEFM, and NEFH which are involved in the maintenance of neuronal caliber. May additionally cooperate with other neuronal intermediate filament proteins to form neuronal filamentous networks. The sequence is that of Neurofilament light polypeptide (nefl) from Xenopus tropicalis (Western clawed frog).